The primary structure comprises 502 residues: Xylulose kinase (502 aa).

82–83 (MH) serves as a coordination point for substrate. Asp-240 serves as the catalytic Proton acceptor.

This sequence belongs to the FGGY kinase family.

The enzyme catalyses D-xylulose + ATP = D-xylulose 5-phosphate + ADP + H(+). In terms of biological role, catalyzes the phosphorylation of D-xylulose to D-xylulose 5-phosphate. In Levilactobacillus brevis (Lactobacillus brevis), this protein is Xylulose kinase.